We begin with the raw amino-acid sequence, 200 residues long: Small ribosomal subunit protein uS4 (200 aa).

The disordered stretch occupies residues 22-43; sequence TGKELERRPYAPGQHGPTQRKK. In terms of domain architecture, S4 RNA-binding spans 92–170; sequence QRLDNIVYRL…VPEYVTFDAE (79 aa).

Belongs to the universal ribosomal protein uS4 family. Part of the 30S ribosomal subunit. Contacts protein S5. The interaction surface between S4 and S5 is involved in control of translational fidelity.

One of the primary rRNA binding proteins, it binds directly to 16S rRNA where it nucleates assembly of the body of the 30S subunit. In terms of biological role, with S5 and S12 plays an important role in translational accuracy. In Listeria monocytogenes serovar 1/2a (strain ATCC BAA-679 / EGD-e), this protein is Small ribosomal subunit protein uS4.